Reading from the N-terminus, the 187-residue chain is Large ribosomal subunit protein uL22 (187 aa).

The disordered stretch occupies residues 161 to 187 (APTDDAPAKKKLSKKKLARQKEKMMRE). Over residues 169 to 178 (KKKLSKKKLA) the composition is skewed to basic residues.

Belongs to the universal ribosomal protein uL22 family.

The polypeptide is Large ribosomal subunit protein uL22 (RpL17) (Bombyx mori (Silk moth)).